Consider the following 1545-residue polypeptide: Tricalbin-3 (1545 aa).

The segment at 1–89 (MTGIKAQVHP…SNPEGKKQSS (89 aa)) is disordered. The Cytoplasmic portion of the chain corresponds to 1 to 206 (MTGIKAQVHP…AYILENFYND (206 aa)). Over residues 62 to 80 (TKTSNSVSDVSKGQKTADS) the composition is skewed to polar residues. Ser67 and Ser112 each carry phosphoserine. The chain crosses the membrane as a helical span at residues 207–227 (WYCNIATVLGTCFFSWLFAYI). A topological domain (extracellular) is located at residue Gly228. A helical transmembrane segment spans residues 229 to 249 (FSWWSMIFIFLGTATVYNAEY). Residues 250–1545 (TRFNRNIRDD…VPEVPQEYTQ (1296 aa)) lie on the Cytoplasmic side of the membrane. An SMP-LTD domain is found at 272–479 (RVESTTWLNS…PPNHLDINVE (208 aa)). The C2 1 domain occupies 470–596 (PPNHLDINVE…LQNPVLDNQT (127 aa)). The stretch at 620–660 (EDKSEEKAVERAEAKAKGKKEDENEDTTEKEEDENEESSQT) forms a coiled coil. A compositionally biased stretch (basic and acidic residues) spans 624-641 (EEKAVERAEAKAKGKKED). A disordered region spans residues 624–660 (EEKAVERAEAKAKGKKEDENEDTTEKEEDENEESSQT). Acidic residues predominate over residues 642–658 (ENEDTTEKEEDENEESS). 2 C2 domains span residues 646–763 (TTEK…AQEF) and 783–897 (MTGA…SGKY). Residues 937–972 (SPEELVNVEKLEKELKEKKKKFEATQEENEQEMEKN) adopt a coiled-coil conformation. Positions 1119 to 1234 (PTSVKLPSSE…EVGKTYNWNL (116 aa)) constitute a C2 4 domain. The Ca(2+) site is built by Asp1150, Asp1156, Asp1204, Asp1206, and Asp1212. The tract at residues 1304–1404 (LLKSLGGNPM…NSRGHSRASS (101 aa)) is disordered. The segment covering 1318–1328 (SSNGNESNGAK) has biased composition (polar residues). The segment covering 1329 to 1340 (KSSEKKSFDRRS) has biased composition (basic and acidic residues). Phosphoserine is present on residues Ser1340, Ser1342, and Ser1346. The span at 1341–1351 (PSNLNSTSVTP) shows a compositional bias: polar residues. Thr1350 is subject to Phosphothreonine. Residue Ser1354 is modified to Phosphoserine. Over residues 1361–1373 (VPNTSYAPVQSAS) the composition is skewed to polar residues. The segment covering 1377–1404 (KPTDNTSSSSNKKDTPSSNSRGHSRASS) has biased composition (low complexity). Residues 1396–1514 (SRGHSRASSF…QQDGQISVKL (119 aa)) form the C2 5 domain. Position 1400 is a phosphoserine (Ser1400).

The protein belongs to the tricalbin family. In terms of assembly, interacts with TCB2 via its C-terminal domain. It depends on Ca(2+) as a cofactor.

It localises to the cell membrane. Its subcellular location is the endoplasmic reticulum membrane. May play a role in membrane trafficking. In Saccharomyces cerevisiae (strain ATCC 204508 / S288c) (Baker's yeast), this protein is Tricalbin-3 (TCB3).